The primary structure comprises 142 residues: Nucleoside diphosphate kinase (142 aa).

6 residues coordinate ATP: lysine 11, phenylalanine 59, arginine 87, threonine 93, arginine 104, and asparagine 114. The active-site Pros-phosphohistidine intermediate is the histidine 117.

The protein belongs to the NDK family. In terms of assembly, homotetramer. It depends on Mg(2+) as a cofactor.

The protein localises to the cytoplasm. It catalyses the reaction a 2'-deoxyribonucleoside 5'-diphosphate + ATP = a 2'-deoxyribonucleoside 5'-triphosphate + ADP. The enzyme catalyses a ribonucleoside 5'-diphosphate + ATP = a ribonucleoside 5'-triphosphate + ADP. In terms of biological role, major role in the synthesis of nucleoside triphosphates other than ATP. The ATP gamma phosphate is transferred to the NDP beta phosphate via a ping-pong mechanism, using a phosphorylated active-site intermediate. In Thiobacillus denitrificans (strain ATCC 25259 / T1), this protein is Nucleoside diphosphate kinase.